Consider the following 331-residue polypeptide: Ribose-phosphate pyrophosphokinase (331 aa).

55–57 (DGE) provides a ligand contact to ATP. Residues histidine 148 and aspartate 187 each coordinate Mg(2+). The active site involves lysine 211. D-ribose 5-phosphate contacts are provided by residues arginine 213, aspartate 237, and 241–245 (DTGGT).

Belongs to the ribose-phosphate pyrophosphokinase family. Class I subfamily. In terms of assembly, homohexamer. Requires Mg(2+) as cofactor.

It is found in the cytoplasm. It catalyses the reaction D-ribose 5-phosphate + ATP = 5-phospho-alpha-D-ribose 1-diphosphate + AMP + H(+). Its pathway is metabolic intermediate biosynthesis; 5-phospho-alpha-D-ribose 1-diphosphate biosynthesis; 5-phospho-alpha-D-ribose 1-diphosphate from D-ribose 5-phosphate (route I): step 1/1. Its function is as follows. Involved in the biosynthesis of the central metabolite phospho-alpha-D-ribosyl-1-pyrophosphate (PRPP) via the transfer of pyrophosphoryl group from ATP to 1-hydroxyl of ribose-5-phosphate (Rib-5-P). The sequence is that of Ribose-phosphate pyrophosphokinase from Prochlorococcus marinus subsp. pastoris (strain CCMP1986 / NIES-2087 / MED4).